The primary structure comprises 470 residues: tRNA modification GTPase MnmE (470 aa).

Residues Arg-24, Glu-81, and Lys-122 each contribute to the (6S)-5-formyl-5,6,7,8-tetrahydrofolate site. One can recognise a TrmE-type G domain in the interval 218–383 (GIKIVIAGKP…LQEYLSNNIK (166 aa)). Asn-228 is a K(+) binding site. GTP-binding positions include 228 to 233 (NAGKSS), 247 to 253 (STISGTT), and 272 to 275 (DTAG). Ser-232 provides a ligand contact to Mg(2+). 3 residues coordinate K(+): Ser-247, Ile-249, and Thr-252. Thr-253 is a Mg(2+) binding site. Lys-470 lines the (6S)-5-formyl-5,6,7,8-tetrahydrofolate pocket.

Belongs to the TRAFAC class TrmE-Era-EngA-EngB-Septin-like GTPase superfamily. TrmE GTPase family. In terms of assembly, homodimer. Heterotetramer of two MnmE and two MnmG subunits. Requires K(+) as cofactor.

The protein localises to the cytoplasm. In terms of biological role, exhibits a very high intrinsic GTPase hydrolysis rate. Involved in the addition of a carboxymethylaminomethyl (cmnm) group at the wobble position (U34) of certain tRNAs, forming tRNA-cmnm(5)s(2)U34. This Blochmanniella pennsylvanica (strain BPEN) protein is tRNA modification GTPase MnmE.